A 445-amino-acid chain; its full sequence is Cyclic GMP-AMP phosphodiesterase SMPDL3A (445 aa).

A signal peptide spans 1-22 (MALPGNFLCCLLVAWLCDPGLG). Residues aspartate 42 and histidine 44 each contribute to the Zn(2+) site. A disulfide bond links cysteine 59 and cysteine 78. The N-linked (GlcNAc...) asparagine glycan is linked to asparagine 66. Zn(2+) is bound at residue aspartate 107. Histidine 111 serves as a coordination point for ATP. N-linked (GlcNAc...) asparagine glycosylation occurs at asparagine 128. Asparagine 148 contributes to the Zn(2+) binding site. 2 residues coordinate ATP: asparagine 148 and histidine 149. Residues asparagine 219 and asparagine 235 are each glycosylated (N-linked (GlcNAc...) asparagine). Residues histidine 249, histidine 290, and histidine 292 each coordinate Zn(2+). N-linked (GlcNAc...) asparagine glycans are attached at residues asparagine 353 and asparagine 364. Cystine bridges form between cysteine 417–cysteine 421 and cysteine 427–cysteine 440.

This sequence belongs to the acid sphingomyelinase family. Monomer. Homodimer; homodimerizes following 2',3'-cGAMP-binding. Requires Zn(2+) as cofactor.

It is found in the secreted. The enzyme catalyses 2',3'-cGAMP + H2O = 5'-pGpA(2'-5') + H(+). It catalyses the reaction 5'-pGpA(2'-5') + H2O = 5'-GpA(2'-5') + phosphate. The catalysed reaction is a ribonucleoside 5'-triphosphate + H2O = a ribonucleoside 5'-diphosphate + phosphate + H(+). It carries out the reaction ATP + H2O = ADP + phosphate + H(+). Functionally, cyclic-nucleotide phosphodiesterase that acts as a negative regulator of innate immunity by mediating degradation of 2',3'-cGAMP, thereby inhibiting the cGAS-STING signaling. Specifically linearizes 2',3'-cGAMP into 2'5'-bond pGpA and further hydrolyzes pGpA to produce GpA. Also has in vitro nucleotide phosphodiesterase activity with nucleoside triphosphates, such as ATP. Has in vitro activity with p-nitrophenyl-TMP. Has lower activity with nucleoside diphosphates, and no activity with nucleoside monophosphates. Has in vitro activity with CDP-choline, giving rise to CMP and phosphocholine. Has in vitro activity with CDP-ethanolamine. Does not have sphingomyelin phosphodiesterase activity. In Rattus norvegicus (Rat), this protein is Cyclic GMP-AMP phosphodiesterase SMPDL3A (Smpdl3a).